A 488-amino-acid polypeptide reads, in one-letter code: B-type flagellin (488 aa).

Belongs to the bacterial flagellin family. Phosphorylated on tyrosine residue(s).

It is found in the secreted. It localises to the bacterial flagellum. Its function is as follows. Flagellin is the subunit protein which polymerizes to form the filaments of bacterial flagella. The protein is B-type flagellin (fliC) of Pseudomonas aeruginosa (strain ATCC 15692 / DSM 22644 / CIP 104116 / JCM 14847 / LMG 12228 / 1C / PRS 101 / PAO1).